The chain runs to 957 residues: Glycine dehydrogenase (decarboxylating) (957 aa).

Lys-708 bears the N6-(pyridoxal phosphate)lysine mark.

Belongs to the GcvP family. As to quaternary structure, the glycine cleavage system is composed of four proteins: P, T, L and H. It depends on pyridoxal 5'-phosphate as a cofactor.

It catalyses the reaction N(6)-[(R)-lipoyl]-L-lysyl-[glycine-cleavage complex H protein] + glycine + H(+) = N(6)-[(R)-S(8)-aminomethyldihydrolipoyl]-L-lysyl-[glycine-cleavage complex H protein] + CO2. In terms of biological role, the glycine cleavage system catalyzes the degradation of glycine. The P protein binds the alpha-amino group of glycine through its pyridoxal phosphate cofactor; CO(2) is released and the remaining methylamine moiety is then transferred to the lipoamide cofactor of the H protein. The polypeptide is Glycine dehydrogenase (decarboxylating) (Salmonella newport (strain SL254)).